Reading from the N-terminus, the 367-residue chain is tRNA N6-adenosine threonylcarbamoyltransferase (367 aa).

Residues histidine 123 and histidine 127 each contribute to the Fe cation site. Residues 145–149, aspartate 178, glycine 191, and asparagine 288 each bind substrate; that span reads LVSGG. A Fe cation-binding site is contributed by aspartate 316.

It belongs to the KAE1 / TsaD family. The cofactor is Fe(2+).

The protein resides in the cytoplasm. The enzyme catalyses L-threonylcarbamoyladenylate + adenosine(37) in tRNA = N(6)-L-threonylcarbamoyladenosine(37) in tRNA + AMP + H(+). In terms of biological role, required for the formation of a threonylcarbamoyl group on adenosine at position 37 (t(6)A37) in tRNAs that read codons beginning with adenine. Is involved in the transfer of the threonylcarbamoyl moiety of threonylcarbamoyl-AMP (TC-AMP) to the N6 group of A37, together with TsaE and TsaB. TsaD likely plays a direct catalytic role in this reaction. This chain is tRNA N6-adenosine threonylcarbamoyltransferase, found in Caulobacter vibrioides (strain ATCC 19089 / CIP 103742 / CB 15) (Caulobacter crescentus).